The primary structure comprises 355 residues: 3-dehydroquinate synthase (355 aa).

Residues 71 to 76, 105 to 109, 129 to 130, Lys-142, and Lys-151 each bind NAD(+); these read EGEERK, GVVGD, and TS. Glu-184, His-246, and His-263 together coordinate Zn(2+).

It belongs to the sugar phosphate cyclases superfamily. Dehydroquinate synthase family. Requires Co(2+) as cofactor. It depends on Zn(2+) as a cofactor. NAD(+) serves as cofactor.

It localises to the cytoplasm. The enzyme catalyses 7-phospho-2-dehydro-3-deoxy-D-arabino-heptonate = 3-dehydroquinate + phosphate. Its pathway is metabolic intermediate biosynthesis; chorismate biosynthesis; chorismate from D-erythrose 4-phosphate and phosphoenolpyruvate: step 2/7. Functionally, catalyzes the conversion of 3-deoxy-D-arabino-heptulosonate 7-phosphate (DAHP) to dehydroquinate (DHQ). This chain is 3-dehydroquinate synthase, found in Streptococcus pneumoniae (strain Hungary19A-6).